The following is a 170-amino-acid chain: MQVDEQRLHFRDAMASLAAAVNIVTTAGHAGRCGITATAVCSVTDTPPSVMVCINANSAMNPVFQGNGRLCINVLNHEQELMARHFAGMTGMAMEERFHQPCWQNGPLGQPVLNGALAGLEGEISEVQTIGTHLVYLVAIKNIILSQDGHGLIYFKRRFHPVRLEMEAPV.

It belongs to the non-flavoprotein flavin reductase family. HpaC subfamily. In terms of assembly, homodimer. 4-HPA 3-monooxygenase consists of a reductase component HpaC and an oxygenase component HpaB.

The catalysed reaction is a reduced flavin + NAD(+) = an oxidized flavin + NADH + 2 H(+). Its pathway is aromatic compound metabolism; 4-hydroxyphenylacetate degradation; pyruvate and succinate semialdehyde from 4-hydroxyphenylacetate: step 1/7. Functionally, catalyzes the reduction of free flavins (FMN, FAD and riboflavin) by NADH. Subsequently, the reduced flavins diffuse to the large HpaB component or to other electron acceptors such as cytochrome c and Fe(3+) ion. The polypeptide is 4-hydroxyphenylacetate 3-monooxygenase reductase component (hpaC) (Salmonella dublin).